Here is an 822-residue protein sequence, read N- to C-terminus: Phenylalanine--tRNA ligase beta subunit (822 aa).

A tRNA-binding domain is found at 39–150 (ADRLVGFRTA…ETAPIGESYA (112 aa)). The region spanning 399-502 (DWKRTARLRF…RLYGLDNVPA (104 aa)) is the B5 domain. Positions 486, 489, and 490 each coordinate Mg(2+). Residues 728–821 (SPLQPVRRDF…VLKATGAVLR (94 aa)) form the FDX-ACB domain.

This sequence belongs to the phenylalanyl-tRNA synthetase beta subunit family. Type 1 subfamily. In terms of assembly, tetramer of two alpha and two beta subunits. Requires Mg(2+) as cofactor.

The protein localises to the cytoplasm. The enzyme catalyses tRNA(Phe) + L-phenylalanine + ATP = L-phenylalanyl-tRNA(Phe) + AMP + diphosphate + H(+). This is Phenylalanine--tRNA ligase beta subunit from Gluconobacter oxydans (strain 621H) (Gluconobacter suboxydans).